The sequence spans 355 residues: Probable nitronate monooxygenase (355 aa).

FMN is bound by residues Asn71, Gln175, Gly180, Gly218, and 237–240 (QMGT).

Belongs to the nitronate monooxygenase family. NMO class I subfamily. Requires FMN as cofactor.

It catalyses the reaction 3 propionate 3-nitronate + 3 O2 + H2O = 3 3-oxopropanoate + 2 nitrate + nitrite + H2O2 + 3 H(+). In terms of biological role, nitronate monooxygenase that uses molecular oxygen to catalyze the oxidative denitrification of alkyl nitronates. Acts on propionate 3-nitronate (P3N), the presumed physiological substrate. Probably functions in the detoxification of P3N, a metabolic poison produced by plants and fungi as a defense mechanism. In Staphylococcus aureus (strain MSSA476), this protein is Probable nitronate monooxygenase.